The sequence spans 368 residues: Queuine tRNA-ribosyltransferase (368 aa).

Catalysis depends on Asp-89, which acts as the Proton acceptor. Residues 89-93 (DSGGF), Asp-143, and Gly-216 contribute to the substrate site. The RNA binding stretch occupies residues 247–253 (GVGKPED). Asp-266 functions as the Nucleophile in the catalytic mechanism. Positions 271–275 (TRNAR) are RNA binding; important for wobble base 34 recognition. Zn(2+)-binding residues include Cys-304, Cys-306, Cys-309, and His-335.

It belongs to the queuine tRNA-ribosyltransferase family. Homodimer. Within each dimer, one monomer is responsible for RNA recognition and catalysis, while the other monomer binds to the replacement base PreQ1. Zn(2+) is required as a cofactor.

It catalyses the reaction 7-aminomethyl-7-carbaguanine + guanosine(34) in tRNA = 7-aminomethyl-7-carbaguanosine(34) in tRNA + guanine. The protein operates within tRNA modification; tRNA-queuosine biosynthesis. In terms of biological role, catalyzes the base-exchange of a guanine (G) residue with the queuine precursor 7-aminomethyl-7-deazaguanine (PreQ1) at position 34 (anticodon wobble position) in tRNAs with GU(N) anticodons (tRNA-Asp, -Asn, -His and -Tyr). Catalysis occurs through a double-displacement mechanism. The nucleophile active site attacks the C1' of nucleotide 34 to detach the guanine base from the RNA, forming a covalent enzyme-RNA intermediate. The proton acceptor active site deprotonates the incoming PreQ1, allowing a nucleophilic attack on the C1' of the ribose to form the product. After dissociation, two additional enzymatic reactions on the tRNA convert PreQ1 to queuine (Q), resulting in the hypermodified nucleoside queuosine (7-(((4,5-cis-dihydroxy-2-cyclopenten-1-yl)amino)methyl)-7-deazaguanosine). The protein is Queuine tRNA-ribosyltransferase of Buchnera aphidicola subsp. Schizaphis graminum (strain Sg).